The following is a 107-amino-acid chain: Immunoglobulin kappa constant (107 aa).

The Ig-like domain occupies 6-103 (PTVSIFPPSS…STSPIVKSFN (98 aa)). Residues Cys27 and Cys87 are joined by a disulfide bond.

This chain is Immunoglobulin kappa constant, found in Mus musculus (Mouse).